We begin with the raw amino-acid sequence, 437 residues long: MADPKKLYIKTYGCQMNVYDSERMAEAMGGEGYVQTDRAEDADMILLNTCHIREKAAEKVYSELGRFKPLKAEKPDLKIGVAGCVAQAEGAEIMRRQPLVDLVVGPQAYHRLPELTARAATGAKALDTDFPEEDKFDHLAARPKAKRGPTAFLTVQEGCDKFCAFCVVPYTRGAEVSRPAARVLTEARDLVERGVREITLLGQNVNAYHGHARGLAGLIWDLAEIDGLERIRFTTSHPNDMDDALIAAHGACDKLMPYLHLPVQSGSDRILKAMNRKHTAESYIRLIERIRAARPDILLSGDFIVGFPGETDQDFADTMALVEAVGYGQAYSFKYSARPGTPAAEKEDVPGEVADARLQTLQALLTRQQRAIQDAKVGTTARVLFEKPGRLPGQMVGKSEHLHAVHVAAPDAARGDLVRVRIAESSANSLRGVLIAA.

One can recognise an MTTase N-terminal domain in the interval 5–121; the sequence is KKLYIKTYGC…LPELTARAAT (117 aa). Cys14, Cys50, Cys84, Cys159, Cys163, and Cys166 together coordinate [4Fe-4S] cluster. Positions 145-371 constitute a Radical SAM core domain; the sequence is AKRGPTAFLT…QALLTRQQRA (227 aa). Residues 374 to 436 enclose the TRAM domain; it reads DAKVGTTARV…ANSLRGVLIA (63 aa).

It belongs to the methylthiotransferase family. MiaB subfamily. In terms of assembly, monomer. [4Fe-4S] cluster serves as cofactor.

The protein resides in the cytoplasm. It catalyses the reaction N(6)-dimethylallyladenosine(37) in tRNA + (sulfur carrier)-SH + AH2 + 2 S-adenosyl-L-methionine = 2-methylsulfanyl-N(6)-dimethylallyladenosine(37) in tRNA + (sulfur carrier)-H + 5'-deoxyadenosine + L-methionine + A + S-adenosyl-L-homocysteine + 2 H(+). Catalyzes the methylthiolation of N6-(dimethylallyl)adenosine (i(6)A), leading to the formation of 2-methylthio-N6-(dimethylallyl)adenosine (ms(2)i(6)A) at position 37 in tRNAs that read codons beginning with uridine. This Dinoroseobacter shibae (strain DSM 16493 / NCIMB 14021 / DFL 12) protein is tRNA-2-methylthio-N(6)-dimethylallyladenosine synthase.